The sequence spans 347 residues: Putative coenzyme F420-dependent oxidoreductase Rv3520c (347 aa).

The protein is Putative coenzyme F420-dependent oxidoreductase Rv3520c of Mycobacterium tuberculosis (strain ATCC 25618 / H37Rv).